The following is a 206-amino-acid chain: Ion-translocating oxidoreductase complex subunit G (206 aa).

A helical membrane pass occupies residues 9 to 29 (GITLALFAAGSTGLTAVINQM). FMN phosphoryl threonine is present on threonine 174.

Belongs to the RnfG family. In terms of assembly, the complex is composed of six subunits: RsxA, RsxB, RsxC, RsxD, RsxE and RsxG. FMN serves as cofactor.

It is found in the cell inner membrane. Its function is as follows. Part of a membrane-bound complex that couples electron transfer with translocation of ions across the membrane. Required to maintain the reduced state of SoxR. In Salmonella typhimurium (strain LT2 / SGSC1412 / ATCC 700720), this protein is Ion-translocating oxidoreductase complex subunit G.